The sequence spans 330 residues: Lipoyl synthase (330 aa).

[4Fe-4S] cluster contacts are provided by Cys-77, Cys-82, Cys-88, Cys-103, Cys-107, Cys-110, and Ser-317. A Radical SAM core domain is found at 89–306 (FNHGTATFMI…RSEAEKMGFE (218 aa)).

This sequence belongs to the radical SAM superfamily. Lipoyl synthase family. The cofactor is [4Fe-4S] cluster.

The protein resides in the cytoplasm. It carries out the reaction [[Fe-S] cluster scaffold protein carrying a second [4Fe-4S](2+) cluster] + N(6)-octanoyl-L-lysyl-[protein] + 2 oxidized [2Fe-2S]-[ferredoxin] + 2 S-adenosyl-L-methionine + 4 H(+) = [[Fe-S] cluster scaffold protein] + N(6)-[(R)-dihydrolipoyl]-L-lysyl-[protein] + 4 Fe(3+) + 2 hydrogen sulfide + 2 5'-deoxyadenosine + 2 L-methionine + 2 reduced [2Fe-2S]-[ferredoxin]. It participates in protein modification; protein lipoylation via endogenous pathway; protein N(6)-(lipoyl)lysine from octanoyl-[acyl-carrier-protein]: step 2/2. Its function is as follows. Catalyzes the radical-mediated insertion of two sulfur atoms into the C-6 and C-8 positions of the octanoyl moiety bound to the lipoyl domains of lipoate-dependent enzymes, thereby converting the octanoylated domains into lipoylated derivatives. The chain is Lipoyl synthase from Haemophilus ducreyi (strain 35000HP / ATCC 700724).